Consider the following 565-residue polypeptide: NAD-dependent malic enzyme (565 aa).

Tyrosine 104 functions as the Proton donor in the catalytic mechanism. Arginine 157 is an NAD(+) binding site. The active-site Proton acceptor is lysine 175. A divalent metal cation-binding residues include glutamate 246, aspartate 247, and aspartate 270. The NAD(+) site is built by aspartate 270 and asparagine 418.

Belongs to the malic enzymes family. Homotetramer. Mg(2+) serves as cofactor. It depends on Mn(2+) as a cofactor.

It catalyses the reaction (S)-malate + NAD(+) = pyruvate + CO2 + NADH. It carries out the reaction oxaloacetate + H(+) = pyruvate + CO2. This chain is NAD-dependent malic enzyme, found in Pectobacterium atrosepticum (strain SCRI 1043 / ATCC BAA-672) (Erwinia carotovora subsp. atroseptica).